Consider the following 376-residue polypeptide: Queuine tRNA-ribosyltransferase (376 aa).

Catalysis depends on aspartate 92, which acts as the Proton acceptor. Substrate-binding positions include 92 to 96, aspartate 146, glutamine 190, and glycine 217; that span reads DSGGF. The tract at residues 248-254 is RNA binding; it reads GVGRPED. Aspartate 267 acts as the Nucleophile in catalysis. Positions 272-276 are RNA binding; important for wobble base 34 recognition; that stretch reads TRNAR. 4 residues coordinate Zn(2+): cysteine 305, cysteine 307, cysteine 310, and histidine 337.

This sequence belongs to the queuine tRNA-ribosyltransferase family. In terms of assembly, homodimer. Within each dimer, one monomer is responsible for RNA recognition and catalysis, while the other monomer binds to the replacement base PreQ1. The cofactor is Zn(2+).

It carries out the reaction 7-aminomethyl-7-carbaguanine + guanosine(34) in tRNA = 7-aminomethyl-7-carbaguanosine(34) in tRNA + guanine. Its pathway is tRNA modification; tRNA-queuosine biosynthesis. In terms of biological role, catalyzes the base-exchange of a guanine (G) residue with the queuine precursor 7-aminomethyl-7-deazaguanine (PreQ1) at position 34 (anticodon wobble position) in tRNAs with GU(N) anticodons (tRNA-Asp, -Asn, -His and -Tyr). Catalysis occurs through a double-displacement mechanism. The nucleophile active site attacks the C1' of nucleotide 34 to detach the guanine base from the RNA, forming a covalent enzyme-RNA intermediate. The proton acceptor active site deprotonates the incoming PreQ1, allowing a nucleophilic attack on the C1' of the ribose to form the product. After dissociation, two additional enzymatic reactions on the tRNA convert PreQ1 to queuine (Q), resulting in the hypermodified nucleoside queuosine (7-(((4,5-cis-dihydroxy-2-cyclopenten-1-yl)amino)methyl)-7-deazaguanosine). In Stenotrophomonas maltophilia (strain R551-3), this protein is Queuine tRNA-ribosyltransferase.